Here is a 225-residue protein sequence, read N- to C-terminus: Polyadenylate-binding protein 2 (225 aa).

A compositionally biased stretch (acidic residues) spans 1–36 (MADEDISLNEDQLLESMEETNGEQETEIVTETEEEG). The interval 1 to 42 (MADEDISLNEDQLLESMEETNGEQETEIVTETEEEGSMQIDP) is disordered. Residues 14–74 (LESMEETNGE…QSEVDKQMAG (61 aa)) adopt a coiled-coil conformation. The 78-residue stretch at 96 to 173 (RSVYVGNVDY…RQIKVMSKRT (78 aa)) folds into the RRM domain.

It is found in the nucleus. Its subcellular location is the cytoplasm. Functionally, involved in the 3'-end formation of mRNA precursors (pre-mRNA) by the addition of a poly(A) tail of 200-250 nt to the upstream cleavage product. Stimulates poly(A) polymerase (PAPOLA) conferring processivity on the poly(A) tail elongation reaction and also controls the poly(A) tail length. Increases the affinity of poly(A) polymerase for RNA. Binds to poly(A) and to poly(G) with high affinity. May protect the poly(A) tail from degradation. The polypeptide is Polyadenylate-binding protein 2 (Drosophila pseudoobscura pseudoobscura (Fruit fly)).